Here is a 311-residue protein sequence, read N- to C-terminus: Putative dihydroorotate dehydrogenase A (fumarate) (311 aa).

Substrate-binding positions include K45, 69 to 73, and N128; that span reads NSMGL. 45-46 is a binding site for FMN; sequence KT. Position 128 (N128) interacts with FMN. The active-site Nucleophile is the C131. The FMN site is built by K165 and V193. 194–195 is a substrate binding site; that stretch reads NS. FMN contacts are provided by residues G220, 248–249, and 270–271; these read GG and GT.

This sequence belongs to the dihydroorotate dehydrogenase family. Type 1 subfamily. As to quaternary structure, homodimer. FMN is required as a cofactor.

It localises to the cytoplasm. The catalysed reaction is (S)-dihydroorotate + fumarate = orotate + succinate. It participates in pyrimidine metabolism; UMP biosynthesis via de novo pathway. Catalyzes the conversion of dihydroorotate to orotate with fumarate as the electron acceptor. The chain is Putative dihydroorotate dehydrogenase A (fumarate) (pyrD) from Streptococcus pyogenes serotype M1.